The sequence spans 229 residues: ATP synthase subunit a (229 aa).

The next 7 helical transmembrane spans lie at 24-44 (RLCF…LLFC), 45-65 (LFDL…FMLF), 83-103 (LLFC…CFLC), 117-137 (FMDV…SLLC), 143-163 (FLRL…FFDF), 177-199 (CYFI…LYLL), and 206-228 (LQLF…FLLF).

Belongs to the ATPase A chain family. F-type ATPases have 2 components, CF(1) - the catalytic core - and CF(0) - the membrane proton channel. CF(1) has five subunits: alpha(3), beta(3), gamma(1), delta(1), epsilon(1). CF(0) has three main subunits: a, b and c.

The protein resides in the mitochondrion inner membrane. Mitochondrial membrane ATP synthase (F(1)F(0) ATP synthase or Complex V) produces ATP from ADP in the presence of a proton gradient across the membrane which is generated by electron transport complexes of the respiratory chain. F-type ATPases consist of two structural domains, F(1) - containing the extramembraneous catalytic core and F(0) - containing the membrane proton channel, linked together by a central stalk and a peripheral stalk. During catalysis, ATP synthesis in the catalytic domain of F(1) is coupled via a rotary mechanism of the central stalk subunits to proton translocation. Key component of the proton channel; it may play a direct role in the translocation of protons across the membrane. This Trypanosoma brucei brucei protein is ATP synthase subunit a (ATP6).